Consider the following 543-residue polypeptide: Chaperonin GroEL (543 aa).

Residues 29 to 32 (TLGP), 86 to 90 (DGTTT), G413, 478 to 480 (NAA), and D494 each bind ATP.

Belongs to the chaperonin (HSP60) family. Forms a cylinder of 14 subunits composed of two heptameric rings stacked back-to-back. Interacts with the co-chaperonin GroES.

Its subcellular location is the cytoplasm. The enzyme catalyses ATP + H2O + a folded polypeptide = ADP + phosphate + an unfolded polypeptide.. In terms of biological role, together with its co-chaperonin GroES, plays an essential role in assisting protein folding. The GroEL-GroES system forms a nano-cage that allows encapsulation of the non-native substrate proteins and provides a physical environment optimized to promote and accelerate protein folding. The polypeptide is Chaperonin GroEL (Lactobacillus gasseri (strain ATCC 33323 / DSM 20243 / BCRC 14619 / CIP 102991 / JCM 1131 / KCTC 3163 / NCIMB 11718 / NCTC 13722 / AM63)).